We begin with the raw amino-acid sequence, 283 residues long: tRNA-cytidine(32) 2-sulfurtransferase (283 aa).

A PP-loop motif motif is present at residues 32–37 (SGGKDS). Residues C107, C110, and C198 each coordinate [4Fe-4S] cluster.

It belongs to the TtcA family. As to quaternary structure, homodimer. Requires Mg(2+) as cofactor. The cofactor is [4Fe-4S] cluster.

The protein localises to the cytoplasm. It catalyses the reaction cytidine(32) in tRNA + S-sulfanyl-L-cysteinyl-[cysteine desulfurase] + AH2 + ATP = 2-thiocytidine(32) in tRNA + L-cysteinyl-[cysteine desulfurase] + A + AMP + diphosphate + H(+). It participates in tRNA modification. Catalyzes the ATP-dependent 2-thiolation of cytidine in position 32 of tRNA, to form 2-thiocytidine (s(2)C32). The sulfur atoms are provided by the cysteine/cysteine desulfurase (IscS) system. In Sorangium cellulosum (strain So ce56) (Polyangium cellulosum (strain So ce56)), this protein is tRNA-cytidine(32) 2-sulfurtransferase.